Reading from the N-terminus, the 504-residue chain is Trifunctional (S)-stylopine synthase/(S)-nandinine synthase/(S)-canadine synthase (504 aa).

The helical transmembrane segment at 16 to 36 (SSTTTTTTILLSLLFTIFIIL) threads the bilayer. C448 contacts heme.

It belongs to the cytochrome P450 family. Heme serves as cofactor. Expressed in roots and at lower levels in stems, leaves and plantlets.

Its subcellular location is the endoplasmic reticulum membrane. The catalysed reaction is (S)-cheilanthifoline + reduced [NADPH--hemoprotein reductase] + O2 = (S)-stylopine + oxidized [NADPH--hemoprotein reductase] + 2 H2O + H(+). It carries out the reaction (S)-tetrahydrocolumbamine + reduced [NADPH--hemoprotein reductase] + O2 = (S)-canadine + oxidized [NADPH--hemoprotein reductase] + 2 H2O + H(+). It catalyses the reaction (S)-scoulerine + reduced [NADPH--hemoprotein reductase] + O2 = (S)-nandinine + oxidized [NADPH--hemoprotein reductase] + 2 H2O + H(+). Methylenedioxy bridge-forming cytochrome P450 involved in the biosynthesis of isoquinoline alkaloids. Converts (S)-cheilanthifoline to (S)-stylopine, (S)-scoulerine to (S)-nandinine and (S)-tetrahydrocolumbamine to (S)-canadine. Can be involved in both sanguinarine and berberine biosynthesis. Catalyzes an oxidative reaction that does not incorporate oxygen into the product. The chain is Trifunctional (S)-stylopine synthase/(S)-nandinine synthase/(S)-canadine synthase from Argemone mexicana (Mexican prickly poppy).